The following is a 544-amino-acid chain: Chaperonin GroEL 1 (544 aa).

Residues 29-32 (TLGP), 86-90 (DGTTT), Gly-413, 479-481 (NAA), and Asp-495 contribute to the ATP site.

It belongs to the chaperonin (HSP60) family. Forms a cylinder of 14 subunits composed of two heptameric rings stacked back-to-back. Interacts with the co-chaperonin GroES.

Its subcellular location is the cytoplasm. It carries out the reaction ATP + H2O + a folded polypeptide = ADP + phosphate + an unfolded polypeptide.. Together with its co-chaperonin GroES, plays an essential role in assisting protein folding. The GroEL-GroES system forms a nano-cage that allows encapsulation of the non-native substrate proteins and provides a physical environment optimized to promote and accelerate protein folding. The protein is Chaperonin GroEL 1 of Trichormus variabilis (strain ATCC 29413 / PCC 7937) (Anabaena variabilis).